Here is a 276-residue protein sequence, read N- to C-terminus: Hydroxyethylthiazole kinase (276 aa).

Met48 lines the substrate pocket. Arg124 and Thr175 together coordinate ATP. Gly202 contributes to the substrate binding site.

It belongs to the Thz kinase family. It depends on Mg(2+) as a cofactor.

It catalyses the reaction 5-(2-hydroxyethyl)-4-methylthiazole + ATP = 4-methyl-5-(2-phosphooxyethyl)-thiazole + ADP + H(+). The protein operates within cofactor biosynthesis; thiamine diphosphate biosynthesis; 4-methyl-5-(2-phosphoethyl)-thiazole from 5-(2-hydroxyethyl)-4-methylthiazole: step 1/1. In terms of biological role, catalyzes the phosphorylation of the hydroxyl group of 4-methyl-5-beta-hydroxyethylthiazole (THZ). This Clostridium beijerinckii (strain ATCC 51743 / NCIMB 8052) (Clostridium acetobutylicum) protein is Hydroxyethylthiazole kinase.